A 901-amino-acid polypeptide reads, in one-letter code: Sperm-associated antigen 1 (901 aa).

TPR repeat units lie at residues 213–246 (ANRE…LPTA), 247–279 (IAYN…DPGN), and 280–313 (VKAL…EPDN). Residues 322-437 (EVERDLKNSE…DNPSGLKRRG (116 aa)) form a disordered region. 2 positions are modified to phosphoserine: S351 and S359. TPR repeat units lie at residues 430–464 (PSGL…EPTG), 472–505 (SILY…HPFS), 507–539 (KPLL…DCGI), 606–639 (FQAL…NSKA), and 640–673 (CAIY…DGEN). The tract at residues 694-776 (GVDPSQVLLS…AEPAEKLDVS (83 aa)) is disordered. S703 is modified (phosphoserine). The span at 708 to 717 (EAARHLDTKN) shows a compositional bias: basic and acidic residues. A phosphoserine mark is found at S739 and S740. Residue 756–763 (PARDGVED) participates in GTP binding. Phosphoserine is present on S766.

Detected in cerebellum, tongue, esophagus, forestomach, sperm and testis.

It localises to the cytoplasm. Its subcellular location is the dynein axonemal particle. Its function is as follows. May play a role in the cytoplasmic assembly of the ciliary dynein arms. May play a role in fertilization. Binds GTP and has GTPase activity. The polypeptide is Sperm-associated antigen 1 (Spag1) (Mus musculus (Mouse)).